A 553-amino-acid polypeptide reads, in one-letter code: 5'-nucleotidase (553 aa).

The N-terminal stretch at 1–21 (MKQRLIVKTALSAAILATLAG) is a signal peptide. C22 carries the N-palmitoyl cysteine lipid modification. Residue C22 is the site of S-diacylglycerol cysteine attachment. A divalent metal cation contacts are provided by D45, H47, D88, N120, H221, H256, and Q258. Residues F432 and 501–507 (YNAAGGD) contribute to the substrate site.

The protein belongs to the 5'-nucleotidase family. Chloride is required as a cofactor. Requires Mg(2+) as cofactor.

It localises to the cell outer membrane. It catalyses the reaction a ribonucleoside 5'-phosphate + H2O = a ribonucleoside + phosphate. Its function is as follows. Degradation of extracellular 5'-nucleotides for nutritional needs. The polypeptide is 5'-nucleotidase (nutA) (Vibrio vulnificus (strain CMCP6)).